Reading from the N-terminus, the 252-residue chain is 2-succinyl-6-hydroxy-2,4-cyclohexadiene-1-carboxylate synthase (252 aa).

The protein belongs to the AB hydrolase superfamily. MenH family. In terms of assembly, monomer.

It catalyses the reaction 5-enolpyruvoyl-6-hydroxy-2-succinyl-cyclohex-3-ene-1-carboxylate = (1R,6R)-6-hydroxy-2-succinyl-cyclohexa-2,4-diene-1-carboxylate + pyruvate. The protein operates within quinol/quinone metabolism; 1,4-dihydroxy-2-naphthoate biosynthesis; 1,4-dihydroxy-2-naphthoate from chorismate: step 3/7. It functions in the pathway quinol/quinone metabolism; menaquinone biosynthesis. In terms of biological role, catalyzes a proton abstraction reaction that results in 2,5-elimination of pyruvate from 2-succinyl-5-enolpyruvyl-6-hydroxy-3-cyclohexene-1-carboxylate (SEPHCHC) and the formation of 2-succinyl-6-hydroxy-2,4-cyclohexadiene-1-carboxylate (SHCHC). This Escherichia coli (strain SE11) protein is 2-succinyl-6-hydroxy-2,4-cyclohexadiene-1-carboxylate synthase.